The chain runs to 66 residues: Phylloseptin-Az3 (66 aa).

An N-terminal signal peptide occupies residues 1-22; that stretch reads MAFLKKSLFLVLFLGLVSLSIC. The propeptide occupies 23 to 44; that stretch reads EEEKRETEEEEYNQEDDDKSEE. Position 65 is a phenylalanine amide (F65).

As to expression, expressed by the skin glands.

It is found in the secreted. In terms of biological role, has antimicrobial activity. In Pithecopus azureus (Orange-legged monkey tree frog), this protein is Phylloseptin-Az3.